Here is a 218-residue protein sequence, read N- to C-terminus: Putative glutamine transport system permease protein GlnP (218 aa).

The ABC transmembrane type-1 domain occupies 19–208; that stretch reads TLITLKYSVI…ILVMLISFIA (190 aa). 4 consecutive transmembrane segments (helical) span residues 25-45, 57-79, 86-108, and 187-207; these read YSVI…LCKV, FYTS…FASP, FTVF…SEVI, and FFPM…ISFI.

This sequence belongs to the binding-protein-dependent transport system permease family. HisMQ subfamily.

The protein resides in the cell inner membrane. In terms of biological role, part of the binding-protein-dependent transport system for glutamine; probably responsible for the translocation of the substrate across the membrane. The protein is Putative glutamine transport system permease protein GlnP (glnP) of Rickettsia bellii (strain RML369-C).